The primary structure comprises 154 residues: MSELELAFQHVAGASAPEAERVQAWLEPVFEAHGRGGELTVRIVDEDESRALNRDYRGRDKPTNVLSFPCELPPGLPAEAAQILGDLVVCAPVVAREAAEQGKPEADHWAHMLVHGALHLLGYDHEDPAQAERMEAEERRILAALGVPDPYQER.

Residues histidine 115, histidine 119, and histidine 125 each contribute to the Zn(2+) site.

Belongs to the endoribonuclease YbeY family. Requires Zn(2+) as cofactor.

The protein resides in the cytoplasm. In terms of biological role, single strand-specific metallo-endoribonuclease involved in late-stage 70S ribosome quality control and in maturation of the 3' terminus of the 16S rRNA. The sequence is that of Endoribonuclease YbeY from Halorhodospira halophila (strain DSM 244 / SL1) (Ectothiorhodospira halophila (strain DSM 244 / SL1)).